We begin with the raw amino-acid sequence, 394 residues long: Proliferation-associated protein 2G4 (394 aa).

S2 carries the N-acetylserine modification. S2 bears the Phosphoserine mark. The tract at residues 2–48 (SGEDEQQEQTIAEDLVVTKYKMGGDIANRVLRSLVEASSSGVSVLSL) is necessary for nucleolar localization. Residues 46–54 (LSLCEKGDA) are RNA-binding. A Glycyl lysine isopeptide (Lys-Gly) (interchain with G-Cter in SUMO2) cross-link involves residue K298. Residues 301-394 (LLQPFNVLYE…ETLEENGAGD (94 aa)) form a necessary for nucleolar localization region. S335 bears the Phosphoserine mark. Residues 358–394 (LQSSASRKTQKKKKKKASKTVENATSGETLEENGAGD) form a disordered region. Position 361 is a phosphoserine; by PKC/PRKCD (S361). Residues 361–375 (SASRKTQKKKKKKAS) form an interaction with RNA region. Residues 365–375 (KTQKKKKKKAS) are compositionally biased toward basic residues. T366 and T386 each carry phosphothreonine.

This sequence belongs to the peptidase M24 family. In terms of assembly, isoform 2 interacts with the cytoplasmic domain of non-phosphorylated ERBB3; the interaction requires PKC activity. Interacts with AR. Treatment with HRG leads to dissociation from ERBB3 and increases association with AR. Interacts with nucleolin/NCL. Component of a ribonucleoprotein complex containing at least PA2G4, NCL, TOP1, PABPC2, RPLP0, acetylated histone H1 (HIST1H1A or H1F1), histone H1 2/4, RPL4, RPL8, RPL15, RPL18, RPL18A, RPL21, RPL11, RPL12, RPL28, RPL27, RPLP2 and RPL24. Interacts with HDAC2. Interacts with RB1; the interaction is enhanced upon PA2G4 dephosphorylation. Interacts with AKT1. Isoform 1 and isoform 2 interact with RNF20. Isoform 2 interacts with HUWE1. Interacts with DNAJC21. Post-translationally, phosphorylated on serine and threonine residues. Phosphorylation is enhanced by HRG treatment. Basal phosphorylation is PKC-dependent and HRG-induced phosphorylation is predominantly PKC-independent. Phosphorylation at Ser-361 by PKC/PRKCD regulates its nucleolar localization. In terms of processing, isoform 2 is polyubiquitinated, leading to proteasomal degradation and phosphorylation by PKC/PRKCD enhances polyubiquitination. As to expression, widely expressed.

The protein resides in the cytoplasm. It is found in the nucleus. The protein localises to the nucleolus. Functionally, may play a role in a ERBB3-regulated signal transduction pathway. Seems be involved in growth regulation. Acts a corepressor of the androgen receptor (AR) and is regulated by the ERBB3 ligand neuregulin-1/heregulin (HRG). Inhibits transcription of some E2F1-regulated promoters, probably by recruiting histone acetylase (HAT) activity. Binds RNA. Associates with 28S, 18S and 5.8S mature rRNAs, several rRNA precursors and probably U3 small nucleolar RNA. May be involved in regulation of intermediate and late steps of rRNA processing. May be involved in ribosome assembly. Mediates cap-independent translation of specific viral IRESs (internal ribosomal entry site). Together with PTBP1 is required for the translation initiation on the foot-and-mouth disease virus (FMDV) IRES. Regulates cell proliferation, differentiation, and survival. Isoform 1 suppresses apoptosis whereas isoform 2 promotes cell differentiation. The sequence is that of Proliferation-associated protein 2G4 (Pa2g4) from Mus musculus (Mouse).